The primary structure comprises 73 residues: Large ribosomal subunit protein bL31 (73 aa).

Positions lysine 34–serine 43 are enriched in basic and acidic residues. The segment at lysine 34–methionine 54 is disordered.

It belongs to the bacterial ribosomal protein bL31 family. Type A subfamily. As to quaternary structure, part of the 50S ribosomal subunit.

Functionally, binds the 23S rRNA. This chain is Large ribosomal subunit protein bL31, found in Rhodopseudomonas palustris (strain BisA53).